The chain runs to 152 residues: Superoxide dismutase [Cu-Zn] 2 (152 aa).

The Cu cation site is built by His45, His47, and His62. A disulfide bridge connects residues Cys56 and Cys145. The Zn(2+) site is built by His62, His70, His79, and Asp82. His119 contributes to the Cu cation binding site.

It belongs to the Cu-Zn superoxide dismutase family. Homodimer. The cofactor is Cu cation. Zn(2+) is required as a cofactor.

It localises to the cytoplasm. The enzyme catalyses 2 superoxide + 2 H(+) = H2O2 + O2. Destroys radicals which are normally produced within the cells and which are toxic to biological systems. This chain is Superoxide dismutase [Cu-Zn] 2 (SODCC.5), found in Solanum lycopersicum (Tomato).